The sequence spans 204 residues: UPF0637 protein SA0957 (204 aa).

Belongs to the UPF0637 family.

The sequence is that of UPF0637 protein SA0957 from Staphylococcus aureus (strain N315).